The following is a 552-amino-acid chain: Phosphoglucomutase (552 aa).

Catalysis depends on Ser143, which acts as the Phosphoserine intermediate. Ser143, Asp295, Asp297, and Asp299 together coordinate Mg(2+).

Belongs to the phosphohexose mutase family. It depends on Mg(2+) as a cofactor.

It carries out the reaction alpha-D-glucose 1-phosphate = alpha-D-glucose 6-phosphate. Its pathway is glycolipid metabolism; diglucosyl-diacylglycerol biosynthesis. In terms of biological role, catalyzes the interconversion between glucose-6-phosphate and alpha-glucose-1-phosphate. This is the first step in the biosynthesis of diglucosyl-diacylglycerol (Glc2-DAG), i.e. the predominant glycolipid found in the S.aureus membrane, which is also used as a membrane anchor for lipoteichoic acid (LTA). The sequence is that of Phosphoglucomutase (pgcA) from Staphylococcus aureus (strain MSSA476).